The sequence spans 465 residues: Eukaryotic translation initiation factor 3 subunit M (465 aa).

The PCI domain maps to glutamate 215–tyrosine 383. The segment at alanine 429 to aspartate 465 is disordered. Composition is skewed to basic and acidic residues over residues serine 433 to arginine 448 and glycine 455 to aspartate 465.

The protein belongs to the eIF-3 subunit M family. Component of the eukaryotic translation initiation factor 3 (eIF-3) complex.

The protein localises to the cytoplasm. Component of the eukaryotic translation initiation factor 3 (eIF-3) complex, which is involved in protein synthesis of a specialized repertoire of mRNAs and, together with other initiation factors, stimulates binding of mRNA and methionyl-tRNAi to the 40S ribosome. The eIF-3 complex specifically targets and initiates translation of a subset of mRNAs involved in cell proliferation. This Coccidioides immitis (strain RS) (Valley fever fungus) protein is Eukaryotic translation initiation factor 3 subunit M.